We begin with the raw amino-acid sequence, 100 residues long: Small ribosomal subunit protein uS14 (100 aa).

The protein belongs to the universal ribosomal protein uS14 family. Part of the 30S ribosomal subunit. Contacts proteins S3 and S10.

Binds 16S rRNA, required for the assembly of 30S particles and may also be responsible for determining the conformation of the 16S rRNA at the A site. The protein is Small ribosomal subunit protein uS14 of Prochlorococcus marinus (strain MIT 9301).